The sequence spans 397 residues: Argininosuccinate synthase (397 aa).

9 to 17 (AYSGGLDTS) contributes to the ATP binding site. Tyrosine 87 contributes to the L-citrulline binding site. Residue glycine 117 participates in ATP binding. Threonine 119, asparagine 123, and aspartate 124 together coordinate L-aspartate. Residue asparagine 123 participates in L-citrulline binding. L-citrulline-binding residues include arginine 127, serine 175, serine 184, glutamate 257, and tyrosine 269.

The protein belongs to the argininosuccinate synthase family. Type 1 subfamily. As to quaternary structure, homotetramer.

The protein localises to the cytoplasm. The enzyme catalyses L-citrulline + L-aspartate + ATP = 2-(N(omega)-L-arginino)succinate + AMP + diphosphate + H(+). The protein operates within amino-acid biosynthesis; L-arginine biosynthesis; L-arginine from L-ornithine and carbamoyl phosphate: step 2/3. In Dictyoglomus thermophilum (strain ATCC 35947 / DSM 3960 / H-6-12), this protein is Argininosuccinate synthase.